A 305-amino-acid polypeptide reads, in one-letter code: tRNA pseudouridine synthase B (305 aa).

Catalysis depends on Asp48, which acts as the Nucleophile.

This sequence belongs to the pseudouridine synthase TruB family. Type 1 subfamily.

The enzyme catalyses uridine(55) in tRNA = pseudouridine(55) in tRNA. Responsible for synthesis of pseudouridine from uracil-55 in the psi GC loop of transfer RNAs. This is tRNA pseudouridine synthase B from Pseudomonas putida (strain ATCC 700007 / DSM 6899 / JCM 31910 / BCRC 17059 / LMG 24140 / F1).